The primary structure comprises 557 residues: Calcium-dependent protein kinase 4 (557 aa).

A disordered region spans residues 1 to 72 (MGNTCRGSIG…LVSPRKASMN (72 aa)). A lipid anchor (N-myristoyl glycine) is attached at Gly2. The span at 15-27 (QGYTQPEDSSCST) shows a compositional bias: polar residues. Positions 28–48 (NHNPSSGNSYSSSDNFSPTSN) are enriched in low complexity. The region spanning 94–352 (YTLGRKLGQG…AHEVLCHPWI (259 aa)) is the Protein kinase domain. ATP contacts are provided by residues 100–108 (LGQGQFGTT) and Lys123. Catalysis depends on Asp218, which acts as the Proton acceptor. Residues 358 to 388 (APDRALDPAVLSRLKQFSAMNKLKKMALRVI) form an autoinhibitory domain region. EF-hand domains follow at residues 395 to 430 (EEIA…YGST), 431 to 466 (LKDT…LNKL), 467 to 502 (EREE…HNMT), and 506 to 536 (FEDI…GNPC). 19 residues coordinate Ca(2+): Asp408, Asp410, Ser412, Glu419, Asp444, Asp446, Ser448, Thr450, Glu455, Asp480, Asp482, Ser484, Tyr486, Glu491, Asp514, Asp516, Asp518, Arg520, and Glu525.

The protein belongs to the protein kinase superfamily. Ser/Thr protein kinase family. CDPK subfamily.

The protein localises to the membrane. The enzyme catalyses L-seryl-[protein] + ATP = O-phospho-L-seryl-[protein] + ADP + H(+). The catalysed reaction is L-threonyl-[protein] + ATP = O-phospho-L-threonyl-[protein] + ADP + H(+). With respect to regulation, activated by calcium. Autophosphorylation may play an important role in the regulation of the kinase activity. In terms of biological role, regulates the production of reactive oxygen species (ROS) by NADPH oxidase. The chain is Calcium-dependent protein kinase 4 (CPK4) from Solanum tuberosum (Potato).